The following is a 301-amino-acid chain: Pyridoxal 5'-phosphate synthase subunit Pdx1 (301 aa).

Residue Asp-26 coordinates D-ribose 5-phosphate. The Schiff-base intermediate with D-ribose 5-phosphate role is filled by Lys-83. D-ribose 5-phosphate is bound at residue Gly-155. Arg-167 contributes to the D-glyceraldehyde 3-phosphate binding site. D-ribose 5-phosphate-binding positions include Gly-216 and 237 to 238 (GS).

Belongs to the PdxS/SNZ family. In terms of assembly, homohexamer and homododecamer. In the presence of Pdx2, forms a dodecamer of heterodimers.

It is found in the cytoplasm. It catalyses the reaction aldehydo-D-ribose 5-phosphate + D-glyceraldehyde 3-phosphate + L-glutamine = pyridoxal 5'-phosphate + L-glutamate + phosphate + 3 H2O + H(+). It functions in the pathway cofactor biosynthesis; pyridoxal 5'-phosphate biosynthesis. In terms of biological role, catalyzes the formation of pyridoxal 5'-phosphate from ribose 5-phosphate (RBP), glyceraldehyde 3-phosphate (G3P) and ammonia. The ammonia is provided by Pdx2. Can also use ribulose 5-phosphate and dihydroxyacetone phosphate as substrates, resulting from enzyme-catalyzed isomerization of RBP and G3P, respectively. This chain is Pyridoxal 5'-phosphate synthase subunit Pdx1 (pdx1), found in Plasmodium falciparum (isolate 3D7).